The sequence spans 185 residues: Ribosome-recycling factor (185 aa).

This sequence belongs to the RRF family.

The protein resides in the cytoplasm. In terms of biological role, responsible for the release of ribosomes from messenger RNA at the termination of protein biosynthesis. May increase the efficiency of translation by recycling ribosomes from one round of translation to another. The protein is Ribosome-recycling factor of Thermus thermophilus (strain ATCC BAA-163 / DSM 7039 / HB27).